Here is a 557-residue protein sequence, read N- to C-terminus: MTDNNKYRDVEIRAPRGNKLTAKSWLTEAPLRMLMNNLDPQVAENPKELVVYGGIGRAARNWACYDKIVETLTRLEDDETLLVQSGKPVGVFKTHSNAPRVLIANSNLVPHWANWEHFNELDAKGLAMYGQMTAGSWIYIGSQGIVQGTYETFVEAGRQHYGGSLKGKWVLTAGLGGMGGAQPLAATLAGACSLNIECQQSRIDFRLETRYVDEQATDLDDALARIAKYTAEGKAISIALHGNAAEILPELVKRGVRPDMVTDQTSAHDPLNGYLPAGWTWEQYRDRAQTEPAAVVKAAKQSMAVHVQAMLDFQKQGIPTFDYGNNIRQMAKEEGVANAFDFPGFVPAYIRPLFCRGVGPFRWAALSGEAEDIYKTDAKVKELIPDDAHLHRWLDMARERISFQGLPARICWVGLGLRAKLGLAFNEMVRSGELSAPVVIGRDHLDSGSVSSPNRETEAMRDGSDAVSDWPLLNALLNTAGGATWVSLHHGGGVGMGFSQHSGMVIVCDGTDEAAERIARVLTNDPGTGVMRHADAGYDIAIDCAKEQGLDLPMITG.

NAD(+)-binding positions include 53-54 (GG), Gln131, 177-179 (GMG), Glu197, Arg202, 243-244 (NA), 264-268 (QTSAH), 274-275 (YL), and Tyr323. Cys411 is a catalytic residue. Residue Gly493 participates in NAD(+) binding.

Belongs to the urocanase family. NAD(+) is required as a cofactor.

The protein resides in the cytoplasm. The catalysed reaction is 4-imidazolone-5-propanoate = trans-urocanate + H2O. It functions in the pathway amino-acid degradation; L-histidine degradation into L-glutamate; N-formimidoyl-L-glutamate from L-histidine: step 2/3. Its function is as follows. Catalyzes the conversion of urocanate to 4-imidazolone-5-propionate. This chain is Urocanate hydratase, found in Pseudomonas putida (strain ATCC 700007 / DSM 6899 / JCM 31910 / BCRC 17059 / LMG 24140 / F1).